A 360-amino-acid chain; its full sequence is Phenylalanine--tRNA ligase alpha subunit (360 aa).

Glu-264 serves as a coordination point for Mg(2+).

It belongs to the class-II aminoacyl-tRNA synthetase family. Phe-tRNA synthetase alpha subunit type 1 subfamily. Tetramer of two alpha and two beta subunits. The cofactor is Mg(2+).

The protein resides in the cytoplasm. It catalyses the reaction tRNA(Phe) + L-phenylalanine + ATP = L-phenylalanyl-tRNA(Phe) + AMP + diphosphate + H(+). The polypeptide is Phenylalanine--tRNA ligase alpha subunit (Streptomyces avermitilis (strain ATCC 31267 / DSM 46492 / JCM 5070 / NBRC 14893 / NCIMB 12804 / NRRL 8165 / MA-4680)).